A 230-amino-acid polypeptide reads, in one-letter code: Cytidylate kinase (230 aa).

Position 12 to 20 (12 to 20 (GPSGAGKGT)) interacts with ATP.

This sequence belongs to the cytidylate kinase family. Type 1 subfamily.

The protein resides in the cytoplasm. The catalysed reaction is CMP + ATP = CDP + ADP. The enzyme catalyses dCMP + ATP = dCDP + ADP. This Yersinia enterocolitica serotype O:8 / biotype 1B (strain NCTC 13174 / 8081) protein is Cytidylate kinase.